The following is a 485-amino-acid chain: uncharacterized protein (485 aa).

Transmembrane regions (helical) follow at residues 13–33 (WSALSSLTIIVLGFLQMVILS), 38–58 (PFEFGVLSIMTVVFLFTDMLA), 79–99 (ALYWVNIFLGVFLFVVTIILS), 111–131 (LSFLIQLTALVFIIMPHGQQY), 160–180 (VIIGIITKNASCAVFGYLLTV), 211–231 (LLFSFYLTLDSILNYINSSIT), 234–254 (IVARVLGAIYVGGYNLSFNVA), 297–317 (INFPALLGLCIIAKDFVYLVF), 321–341 (WLFIVPTLQLLCIAGAMRMVA), 365–385 (IIIFIPVLYFSTIWNGMVGAA), 388–408 (FLICQAINALLSYFFLLKPVL), 420–440 (FIPFVHTLPMILLLLVCDIYI), and 445–465 (LTFFILKIVIGGGVYILTIFI).

The protein belongs to the polysaccharide synthase family.

It is found in the cell membrane. This is an uncharacterized protein from Klebsiella pneumoniae.